Reading from the N-terminus, the 281-residue chain is Transcription factor LBX1 (281 aa).

Basic and acidic residues predominate over residues 1 to 20; sequence MTSKEDGKAAPGEERRRSPL. A disordered region spans residues 1–35; that stretch reads MTSKEDGKAAPGEERRRSPLDHLPPPANSNKPLTP. Positions 125–184 form a DNA-binding region, homeobox; it reads RRKSRTAFTNHQIYELEKRFLYQKYLSPADRDQIAQQLGLTNAQVITWFQNRRAKLKRDL. The tract at residues 214 to 281 is disordered; sequence NSEATAGGGG…EEDEEIDVDD (68 aa). Polar residues predominate over residues 253-267; the sequence is SPASPLTDQPASSQD. Residues 268 to 281 show a composition bias toward acidic residues; the sequence is CSEDEEDEEIDVDD.

Interacts with SKOR1 which acts as a transcriptional corepressor.

The protein resides in the nucleus. In terms of biological role, transcription factor required for the development of GABAergic interneurons in the dorsal horn of the spinal cord and migration and further development of hypaxial muscle precursor cells for limb muscles, diaphragm and hypoglossal cord. This chain is Transcription factor LBX1 (LBX1), found in Homo sapiens (Human).